The primary structure comprises 333 residues: Probable tRNA pseudouridine synthase B (333 aa).

The active-site Nucleophile is D66. Residues 233-308 enclose the PUA domain; the sequence is LKKIIVKDSA…EVVEITRVIM (76 aa).

The protein belongs to the pseudouridine synthase TruB family. Type 2 subfamily.

It carries out the reaction uridine(55) in tRNA = pseudouridine(55) in tRNA. Could be responsible for synthesis of pseudouridine from uracil-55 in the psi GC loop of transfer RNAs. In Methanococcus maripaludis (strain C6 / ATCC BAA-1332), this protein is Probable tRNA pseudouridine synthase B.